The following is a 257-amino-acid chain: Septu protein PtuB (257 aa).

In terms of domain architecture, HNH spans 49–96 (CVYCECRLDEESKYMEVEHFLPKDTYPNLVVNWRNLLPSCKRCNGKKG).

Component of antiviral defense system Septu type I, composed of PtuA and PtuB. Expression of Septu type I in B.subtilis (strain BEST7003) confers resistance to phages SBSphiC and SBSphiJ. May be a nuclease. This chain is Septu protein PtuB, found in Bacillus thuringiensis.